Reading from the N-terminus, the 450-residue chain is tRNA modification GTPase MnmE (450 aa).

Positions 23, 80, and 123 each coordinate (6S)-5-formyl-5,6,7,8-tetrahydrofolate. The TrmE-type G domain occupies 219–372 (GLHVVLAGKP…LRQRLLQLAG (154 aa)). K(+) is bound at residue asparagine 229. Residues 229–234 (NVGKSS), 248–254 (TPIAGTT), 273–276 (DTAG), and 353–355 (SAR) each bind GTP. Position 233 (serine 233) interacts with Mg(2+). Residues threonine 248, isoleucine 250, and threonine 253 each contribute to the K(+) site. A Mg(2+)-binding site is contributed by threonine 254. Residue lysine 450 participates in (6S)-5-formyl-5,6,7,8-tetrahydrofolate binding.

The protein belongs to the TRAFAC class TrmE-Era-EngA-EngB-Septin-like GTPase superfamily. TrmE GTPase family. Homodimer. Heterotetramer of two MnmE and two MnmG subunits. The cofactor is K(+).

It is found in the cytoplasm. In terms of biological role, exhibits a very high intrinsic GTPase hydrolysis rate. Involved in the addition of a carboxymethylaminomethyl (cmnm) group at the wobble position (U34) of certain tRNAs, forming tRNA-cmnm(5)s(2)U34. In Bordetella bronchiseptica (strain ATCC BAA-588 / NCTC 13252 / RB50) (Alcaligenes bronchisepticus), this protein is tRNA modification GTPase MnmE.